A 188-amino-acid polypeptide reads, in one-letter code: dITP/XTP pyrophosphatase (188 aa).

10–15 lines the substrate pocket; sequence TSNPHK. Mg(2+) is bound by residues Glu-39 and Asp-69. Asp-69 (proton acceptor) is an active-site residue. Residues Ser-70, 145 to 148, Lys-168, and 173 to 174 each bind substrate; these read FGFD and HR.

It belongs to the HAM1 NTPase family. In terms of assembly, homodimer. It depends on Mg(2+) as a cofactor.

It carries out the reaction XTP + H2O = XMP + diphosphate + H(+). It catalyses the reaction dITP + H2O = dIMP + diphosphate + H(+). The catalysed reaction is ITP + H2O = IMP + diphosphate + H(+). Functionally, pyrophosphatase that catalyzes the hydrolysis of nucleoside triphosphates to their monophosphate derivatives, with a high preference for the non-canonical purine nucleotides XTP (xanthosine triphosphate), dITP (deoxyinosine triphosphate) and ITP. Seems to function as a house-cleaning enzyme that removes non-canonical purine nucleotides from the nucleotide pool, thus preventing their incorporation into DNA/RNA and avoiding chromosomal lesions. This is dITP/XTP pyrophosphatase from Ignicoccus hospitalis (strain KIN4/I / DSM 18386 / JCM 14125).